A 342-amino-acid chain; its full sequence is Farnesyl pyrophosphate synthase (342 aa).

Positions 47, 50, and 86 each coordinate isopentenyl diphosphate. Residues D93 and D97 each coordinate Mg(2+). Residue R102 participates in dimethylallyl diphosphate binding. R103 lines the isopentenyl diphosphate pocket. 5 residues coordinate dimethylallyl diphosphate: K190, T191, Q229, K246, and K255.

It belongs to the FPP/GGPP synthase family. Homodimer. Mg(2+) is required as a cofactor. Mostly expressed in roots and seeds, and to a lower extent, in leaves and stems.

Its subcellular location is the cytoplasm. It carries out the reaction isopentenyl diphosphate + dimethylallyl diphosphate = (2E)-geranyl diphosphate + diphosphate. The enzyme catalyses isopentenyl diphosphate + (2E)-geranyl diphosphate = (2E,6E)-farnesyl diphosphate + diphosphate. The protein operates within isoprenoid biosynthesis; farnesyl diphosphate biosynthesis; farnesyl diphosphate from geranyl diphosphate and isopentenyl diphosphate: step 1/1. It functions in the pathway isoprenoid biosynthesis; geranyl diphosphate biosynthesis; geranyl diphosphate from dimethylallyl diphosphate and isopentenyl diphosphate: step 1/1. Its activity is regulated as follows. Stimulated by methyl jasmonate (MeJA). Functionally, catalyzes the sequential condensation of isopentenyl pyrophosphate with the allylic pyrophosphates, dimethylallyl pyrophosphate, and then with the resultant geranylpyrophosphate to the ultimate product farnesyl pyrophosphate. Component of the triterpene saponins (e.g. ginsenosides or panaxosides) and phytosterols biosynthetic pathways. Promotes the accumulation of ginsenosides. The polypeptide is Farnesyl pyrophosphate synthase (Panax ginseng (Korean ginseng)).